The primary structure comprises 204 residues: Lysozyme G (204 aa).

The first 19 residues, 1–19 (MHLMLVLLGLAALLGTSQS), serve as a signal peptide directing secretion. 2 disulfide bridges follow: Cys23-Cys79 and Cys37-Cys48. Catalysis depends on residues Glu92 and Asp105.

It belongs to the glycosyl hydrolase 23 family.

The protein resides in the secreted. It catalyses the reaction Hydrolysis of (1-&gt;4)-beta-linkages between N-acetylmuramic acid and N-acetyl-D-glucosamine residues in a peptidoglycan and between N-acetyl-D-glucosamine residues in chitodextrins.. Its function is as follows. Has bacteriolytic activity against M.luteus. This Dromaius novaehollandiae (Emu) protein is Lysozyme G.